The primary structure comprises 239 residues: uncharacterized protein (239 aa).

It belongs to the initiator RepB protein family.

Its function is as follows. Mutations in ORF 239 affects the incN plasmid pUC1 E.coli polA-independence but not its autonomous replication ability. This is an uncharacterized protein from Escherichia coli.